A 125-amino-acid polypeptide reads, in one-letter code: Large ribosomal subunit protein bL12 (125 aa).

This sequence belongs to the bacterial ribosomal protein bL12 family. In terms of assembly, homodimer. Part of the ribosomal stalk of the 50S ribosomal subunit. Forms a multimeric L10(L12)X complex, where L10 forms an elongated spine to which 2 to 4 L12 dimers bind in a sequential fashion. Binds GTP-bound translation factors.

In terms of biological role, forms part of the ribosomal stalk which helps the ribosome interact with GTP-bound translation factors. Is thus essential for accurate translation. The polypeptide is Large ribosomal subunit protein bL12 (Francisella tularensis subsp. holarctica (strain FTNF002-00 / FTA)).